The primary structure comprises 295 residues: Glutamate-binding protein GluB (295 aa).

The first 26 residues, 1-26, serve as a signal peptide directing secretion; it reads MSAKRTFTRIGAILGATALAGVTLTA. The N-palmitoyl cysteine moiety is linked to residue Cys-27. Residue Cys-27 is the site of S-diacylglycerol cysteine attachment.

This sequence belongs to the bacterial solute-binding protein 3 family. In terms of assembly, the complex is composed of two ATP-binding proteins (GluA), two transmembrane proteins (GluC and GluD) and a solute-binding protein (GluB).

The protein localises to the cell membrane. Its activity is regulated as follows. Binding of glutamate or asparatate induces a higher thermal stability of the protein structure. In terms of biological role, part of the ABC transporter complex GluABCD involved in glutamate uptake. Binds glutamate with a high affinity. Also binds aspartate with high affinity, suggesting that GluB could be involved in the transport of both amino acid residues into the cell. The polypeptide is Glutamate-binding protein GluB (Corynebacterium glutamicum (strain ATCC 13032 / DSM 20300 / JCM 1318 / BCRC 11384 / CCUG 27702 / LMG 3730 / NBRC 12168 / NCIMB 10025 / NRRL B-2784 / 534)).